We begin with the raw amino-acid sequence, 192 residues long: Leucine-rich repeat-containing protein 51 (192 aa).

3 LRR repeats span residues 49–71, 80–101, and 103–124; these read SLTQSLWLNNNVLNDLRDFNQVA, NLAWIDLSFNDLTSIDPVLTTF, and NLSVLYLHGNSIQRLGEVNKLA. An LRRCT domain is found at 137–175; the sequence is NPMEEEKGYRQYVLCTLSRITTFDFAGVTKADRTTAEVW.

The protein resides in the cytoplasm. In Pan troglodytes (Chimpanzee), this protein is Leucine-rich repeat-containing protein 51.